The sequence spans 320 residues: Pseudouridine-5'-phosphate glycosidase (320 aa).

Glutamate 25 acts as the Proton donor in catalysis. Positions 85 and 105 each coordinate substrate. Mn(2+) is bound at residue aspartate 137. 139-141 (SAD) is a substrate binding site. The Nucleophile role is filled by lysine 158.

The protein belongs to the pseudouridine-5'-phosphate glycosidase family. In terms of assembly, homotrimer. Requires Mn(2+) as cofactor.

It catalyses the reaction D-ribose 5-phosphate + uracil = psi-UMP + H2O. In terms of biological role, catalyzes the reversible cleavage of pseudouridine 5'-phosphate (PsiMP) to ribose 5-phosphate and uracil. Functions biologically in the cleavage direction, as part of a pseudouridine degradation pathway. The sequence is that of Pseudouridine-5'-phosphate glycosidase from Rhodospirillum centenum (strain ATCC 51521 / SW).